The sequence spans 508 residues: Light-independent protochlorophyllide reductase subunit B (508 aa).

Asp-36 is a [4Fe-4S] cluster binding site. The active-site Proton donor is the Asp-294. 429-430 serves as a coordination point for substrate; that stretch reads GM.

This sequence belongs to the ChlB/BchB/BchZ family. As to quaternary structure, protochlorophyllide reductase is composed of three subunits; ChlL, ChlN and ChlB. Forms a heterotetramer of two ChlB and two ChlN subunits. The cofactor is [4Fe-4S] cluster.

It catalyses the reaction chlorophyllide a + oxidized 2[4Fe-4S]-[ferredoxin] + 2 ADP + 2 phosphate = protochlorophyllide a + reduced 2[4Fe-4S]-[ferredoxin] + 2 ATP + 2 H2O. The protein operates within porphyrin-containing compound metabolism; chlorophyll biosynthesis (light-independent). In terms of biological role, component of the dark-operative protochlorophyllide reductase (DPOR) that uses Mg-ATP and reduced ferredoxin to reduce ring D of protochlorophyllide (Pchlide) to form chlorophyllide a (Chlide). This reaction is light-independent. The NB-protein (ChlN-ChlB) is the catalytic component of the complex. The chain is Light-independent protochlorophyllide reductase subunit B from Synechocystis sp. (strain ATCC 27184 / PCC 6803 / Kazusa).